A 71-amino-acid polypeptide reads, in one-letter code: UPF0352 protein Spea_1764 (71 aa).

This sequence belongs to the UPF0352 family.

The chain is UPF0352 protein Spea_1764 from Shewanella pealeana (strain ATCC 700345 / ANG-SQ1).